We begin with the raw amino-acid sequence, 177 residues long: Large ribosomal subunit protein uL6 (177 aa).

It belongs to the universal ribosomal protein uL6 family. As to quaternary structure, part of the 50S ribosomal subunit.

This protein binds to the 23S rRNA, and is important in its secondary structure. It is located near the subunit interface in the base of the L7/L12 stalk, and near the tRNA binding site of the peptidyltransferase center. The polypeptide is Large ribosomal subunit protein uL6 (Roseobacter denitrificans (strain ATCC 33942 / OCh 114) (Erythrobacter sp. (strain OCh 114))).